The sequence spans 100 residues: Large ribosomal subunit protein bL21 (100 aa).

Belongs to the bacterial ribosomal protein bL21 family. In terms of assembly, part of the 50S ribosomal subunit. Contacts protein L20.

Its function is as follows. This protein binds to 23S rRNA in the presence of protein L20. This chain is Large ribosomal subunit protein bL21, found in Mycoplasmopsis synoviae (strain 53) (Mycoplasma synoviae).